A 282-amino-acid polypeptide reads, in one-letter code: Bifunctional protein FolD (282 aa).

Residues 164-166 (GRS) and Ser-189 contribute to the NADP(+) site.

The protein belongs to the tetrahydrofolate dehydrogenase/cyclohydrolase family. Homodimer.

The enzyme catalyses (6R)-5,10-methylene-5,6,7,8-tetrahydrofolate + NADP(+) = (6R)-5,10-methenyltetrahydrofolate + NADPH. It carries out the reaction (6R)-5,10-methenyltetrahydrofolate + H2O = (6R)-10-formyltetrahydrofolate + H(+). Its pathway is one-carbon metabolism; tetrahydrofolate interconversion. Its function is as follows. Catalyzes the oxidation of 5,10-methylenetetrahydrofolate to 5,10-methenyltetrahydrofolate and then the hydrolysis of 5,10-methenyltetrahydrofolate to 10-formyltetrahydrofolate. In Anaeromyxobacter dehalogenans (strain 2CP-C), this protein is Bifunctional protein FolD.